Reading from the N-terminus, the 158-residue chain is Transcription elongation factor GreA (158 aa).

Belongs to the GreA/GreB family.

In terms of biological role, necessary for efficient RNA polymerase transcription elongation past template-encoded arresting sites. The arresting sites in DNA have the property of trapping a certain fraction of elongating RNA polymerases that pass through, resulting in locked ternary complexes. Cleavage of the nascent transcript by cleavage factors such as GreA or GreB allows the resumption of elongation from the new 3'terminus. GreA releases sequences of 2 to 3 nucleotides. This is Transcription elongation factor GreA from Psychrobacter cryohalolentis (strain ATCC BAA-1226 / DSM 17306 / VKM B-2378 / K5).